The primary structure comprises 411 residues: MNILKDLEERLILKDISNKDKFANLSPSTTGVYVGFDPTAESLHLGNYILISVLLRFKEYGFKTYAVLGGATGMIGDPSFKDSERVLLDNESVNKNKSKIKAQLESFGLEVIDNYDFYKDMNVLEFLRNVGKLVNVSYMMAKESVQKRIQKGLSFTEFTYQLLQGFDFLKTYQELGVKVQLGGSDQWGNIVTGIDMISKVVGDKHEAVGVTVNLLSDENGKKIGKSTGGGALWIDKNMCSPFKMYQYLLSQKDSRIKELLYWFSFKSVSEINEVLEKHFANPSTQEAQRFLASEVVENIFGANELKQAKNITKILFDKSFDASVLTLNDLEIIENYLPTCPIRQGDSVIETLIKNKFIVSNREAREFIQAKALKIDNKEIEFDSIYSPSLFEGKYAFFKKGKKQVILFKTV.

Tyr-33 lines the L-tyrosine pocket. The short motif at 38-47 (PTAESLHLGN) is the 'HIGH' region element. Residues Tyr-160 and Gln-164 each coordinate L-tyrosine. A 'KMSKS' region motif is present at residues 222–226 (KIGKS). Lys-225 provides a ligand contact to ATP. One can recognise an S4 RNA-binding domain in the interval 347–411 (SVIETLIKNK…KKQVILFKTV (65 aa)).

The protein belongs to the class-I aminoacyl-tRNA synthetase family. TyrS type 1 subfamily. Homodimer.

The protein localises to the cytoplasm. The enzyme catalyses tRNA(Tyr) + L-tyrosine + ATP = L-tyrosyl-tRNA(Tyr) + AMP + diphosphate + H(+). In terms of biological role, catalyzes the attachment of tyrosine to tRNA(Tyr) in a two-step reaction: tyrosine is first activated by ATP to form Tyr-AMP and then transferred to the acceptor end of tRNA(Tyr). In Mycoplasmopsis agalactiae (strain NCTC 10123 / CIP 59.7 / PG2) (Mycoplasma agalactiae), this protein is Tyrosine--tRNA ligase.